The chain runs to 237 residues: Chaplin-B (237 aa).

An N-terminal signal peptide occupies residues 1 to 26 (MRRVTRNGVLAVAASGALAVTMPAYA). The 41-residue stretch at 42-82 (SPGLISGNTVQLPVDVPVDVCGNTVNVVGLLNPAAGNGCAD) folds into the Chaplin 1 domain. Disordered stretches follow at residues 81–127 (ADSG…LSGN) and 148–216 (GIGN…TLAG). Over residues 101 to 115 (GSATEATSGGAAAEG) the composition is skewed to low complexity. The region spanning 120 to 160 (SPGVLSGNGVQLPVHLPVNVSGNSVNVVGIGNPAVGNESTN) is the Chaplin 2 domain. Over residues 169–178 (VRPPAEPEPS) the composition is skewed to pro residues. An LPXTG sorting signal motif is present at residues 202–206 (LAHTG). At threonine 205 the chain carries Pentaglycyl murein peptidoglycan amidated threonine. Positions 206–237 (GTDRTLPTLAGGAALVLGGTVLYRRFRPGSGD) are cleaved as a propeptide — removed by sortase.

The protein belongs to the chaplin family. Long chaplin subfamily.

Its subcellular location is the secreted. The protein localises to the cell wall. One of 8 partially redundant surface-active proteins required for efficient formation of aerial mycelium; the short chaplins assemble into a hydrophobic, amyloidal fibrillar surface layer that envelopes and protects aerial hyphae and spores, presumably anchored to the long chaplins. Chaplins have an overlapping function with the surface-active SapB peptide; chaplins are essential on minimal medium while on rich medium both chaplins and SapB are required for efficient aerial hyphae formation. The long chaplins (ChpA, ChpB, ChpC) are not absolutely necessary for short chaplin localization or rodlet formation, but probably play a role in initiating aerial hyphae development. Chaplins are also involved in cell attachment to a hydrophobic surface. This chain is Chaplin-B, found in Streptomyces coelicolor (strain ATCC BAA-471 / A3(2) / M145).